The sequence spans 425 residues: Protein let-756 (425 aa).

Disordered regions lie at residues leucine 277 to glutamate 298 and glutamate 314 to proline 425. Positions lysine 281–arginine 291 are enriched in basic residues. A compositionally biased stretch (polar residues) spans alanine 329 to asparagine 340. Residues histidine 378 to arginine 389 show a composition bias toward basic residues. Over residues aspartate 395–proline 425 the composition is skewed to polar residues.

It belongs to the heparin-binding growth factors family. Interacts with pal-1. Expressed in pharynx, CAN neuron and body wall muscles.

It is found in the nucleus. Its subcellular location is the membrane. Functionally, required for larval development. Probably by binding receptor egl-15, negatively regulates membrane protrusion from body wall muscles during larval development. This is Protein let-756 (let-756) from Caenorhabditis elegans.